Here is a 971-residue protein sequence, read N- to C-terminus: Isoleucine--tRNA ligase (971 aa).

The 'HIGH' region signature appears at 64 to 74 (PYANGHIHIGH). Glutamate 602 contributes to the L-isoleucyl-5'-AMP binding site. The 'KMSKS' region signature appears at 643-647 (KMSKS). Lysine 646 is a binding site for ATP.

This sequence belongs to the class-I aminoacyl-tRNA synthetase family. IleS type 1 subfamily. Monomer.

Its subcellular location is the cytoplasm. The catalysed reaction is tRNA(Ile) + L-isoleucine + ATP = L-isoleucyl-tRNA(Ile) + AMP + diphosphate. Its function is as follows. Catalyzes the attachment of isoleucine to tRNA(Ile). As IleRS can inadvertently accommodate and process structurally similar amino acids such as valine, to avoid such errors it has two additional distinct tRNA(Ile)-dependent editing activities. One activity is designated as 'pretransfer' editing and involves the hydrolysis of activated Val-AMP. The other activity is designated 'posttransfer' editing and involves deacylation of mischarged Val-tRNA(Ile). The sequence is that of Isoleucine--tRNA ligase from Bartonella quintana (strain Toulouse) (Rochalimaea quintana).